The primary structure comprises 551 residues: Palmdelphin (551 aa).

An N-acetylmethionine modification is found at methionine 1. Residues glutamine 12–isoleucine 106 are a coiled coil. Lysine 125 is covalently cross-linked (Glycyl lysine isopeptide (Lys-Gly) (interchain with G-Cter in SUMO2)). Serine 135 is modified (phosphoserine). A Glycyl lysine isopeptide (Lys-Gly) (interchain with G-Cter in SUMO1); alternate cross-link involves residue lysine 179. Lysine 179 is covalently cross-linked (Glycyl lysine isopeptide (Lys-Gly) (interchain with G-Cter in SUMO2); alternate). A compositionally biased stretch (basic and acidic residues) spans glutamate 248–glutamate 259. Residues glutamate 248 to glycine 280 are disordered. Residues threonine 270 to glycine 280 show a composition bias toward polar residues. Position 271 is a phosphothreonine (threonine 271). Phosphoserine is present on residues serine 321, serine 370, serine 384, and serine 385. Disordered stretches follow at residues threonine 342–glutamate 392 and aspartate 449–serine 535. The span at lysine 484–asparagine 495 shows a compositional bias: basic and acidic residues. 3 positions are modified to phosphoserine: serine 498, serine 515, and serine 520.

This sequence belongs to the paralemmin family. In terms of assembly, interacts with GLUL. Post-translationally, phosphorylated. As to expression, ubiquitous. Most abundant in cardiac and skeletal muscle.

Its subcellular location is the cytoplasm. The protein resides in the cell projection. It localises to the dendrite. The protein localises to the dendritic spine. The chain is Palmdelphin (PALMD) from Homo sapiens (Human).